Here is a 217-residue protein sequence, read N- to C-terminus: tRNA (guanine-N(7)-)-methyltransferase (217 aa).

S-adenosyl-L-methionine contacts are provided by glutamate 43, aspartate 68, asparagine 101, and asparagine 123. Lysine 127 contacts substrate. An interaction with RNA region spans residues arginine 129–arginine 134. Substrate contacts are provided by residues aspartate 159 and threonine 196–glutamate 199.

Belongs to the class I-like SAM-binding methyltransferase superfamily. TrmB family.

It carries out the reaction guanosine(46) in tRNA + S-adenosyl-L-methionine = N(7)-methylguanosine(46) in tRNA + S-adenosyl-L-homocysteine. The protein operates within tRNA modification; N(7)-methylguanine-tRNA biosynthesis. Functionally, catalyzes the formation of N(7)-methylguanine at position 46 (m7G46) in tRNA. In Clostridium botulinum (strain 657 / Type Ba4), this protein is tRNA (guanine-N(7)-)-methyltransferase.